The primary structure comprises 447 residues: Alliin lyase (447 aa).

Residues 1-2 (QA) constitute a propeptide that is removed on maturation. The EGF-like; atypical domain occupies 15 to 61 (EAVANINCSGHGRAFLDGILSDGSPKCECNTCYTGADCSQKITGCSA). Asn21 carries N-linked (GlcNAc...) asparagine glycosylation. 3 cysteine pairs are disulfide-bonded: Cys22/Cys41, Cys43/Cys52, and Cys46/Cys59. 94-102 (YFFNPVSNF) contributes to the chloride binding site. 2 N-linked (GlcNAc...) asparagine glycosylation sites follow: Asn148 and Asn193. Position 253 is an N6-(pyridoxal phosphate)lysine (Lys253). N-linked (GlcNAc...) asparagine glycosylation is present at Asn330. A disulfide bond links Cys370 and Cys378.

The protein belongs to the alliinase family. As to quaternary structure, homodimer. Pyridoxal 5'-phosphate serves as cofactor.

The protein localises to the vacuole. It carries out the reaction an S-alkyl-L-cysteine S-oxide = an S-alkyl sulfenate + 2-aminoprop-2-enoate. The protein is Alliin lyase of Allium cepa var. aggregatum (Shallot).